Consider the following 127-residue polypeptide: Large ribosomal subunit protein bL17 (127 aa).

The protein belongs to the bacterial ribosomal protein bL17 family. As to quaternary structure, part of the 50S ribosomal subunit. Contacts protein L32.

The protein is Large ribosomal subunit protein bL17 of Alcanivorax borkumensis (strain ATCC 700651 / DSM 11573 / NCIMB 13689 / SK2).